The sequence spans 59 residues: LICYNQLGTKPPTTETCGDDSCYKMIWTYDGVIRRGCGCFTPRGDMPRPRCCKSDKCNL.

Intrachain disulfides connect C3–C22, C17–C37, C39–C51, and C52–C57. The Cell attachment site signature appears at R43–D45.

The protein belongs to the three-finger toxin family. Short-chain subfamily. Antiplatelet toxin sub-subfamily. As to expression, expressed by the venom gland.

It is found in the secreted. Functionally, inhibits ADP-induced platelet aggregation and inhibits the binding of purified platelet fibrinogen receptor alpha-IIb/beta-3 (ITGA2B/ITGB3) to immobilized fibrinogen. The protein is Thrombostatin of Dendroaspis angusticeps (Eastern green mamba).